We begin with the raw amino-acid sequence, 186 residues long: ATP synthase subunit delta (186 aa).

It belongs to the ATPase delta chain family. F-type ATPases have 2 components, F(1) - the catalytic core - and F(0) - the membrane proton channel. F(1) has five subunits: alpha(3), beta(3), gamma(1), delta(1), epsilon(1). CF(0) has four main subunits: a(1), b(1), b'(1) and c(10-14). The alpha and beta chains form an alternating ring which encloses part of the gamma chain. F(1) is attached to F(0) by a central stalk formed by the gamma and epsilon chains, while a peripheral stalk is formed by the delta, b and b' chains.

Its subcellular location is the cell inner membrane. Functionally, f(1)F(0) ATP synthase produces ATP from ADP in the presence of a proton or sodium gradient. F-type ATPases consist of two structural domains, F(1) containing the extramembraneous catalytic core and F(0) containing the membrane proton channel, linked together by a central stalk and a peripheral stalk. During catalysis, ATP synthesis in the catalytic domain of F(1) is coupled via a rotary mechanism of the central stalk subunits to proton translocation. Its function is as follows. This protein is part of the stalk that links CF(0) to CF(1). It either transmits conformational changes from CF(0) to CF(1) or is implicated in proton conduction. The chain is ATP synthase subunit delta from Bradyrhizobium sp. (strain BTAi1 / ATCC BAA-1182).